Here is a 175-residue protein sequence, read N- to C-terminus: Peptide deformylase (175 aa).

Residues C96 and H138 each contribute to the Fe cation site. E139 is a catalytic residue. H142 contacts Fe cation.

Belongs to the polypeptide deformylase family. Fe(2+) is required as a cofactor.

It carries out the reaction N-terminal N-formyl-L-methionyl-[peptide] + H2O = N-terminal L-methionyl-[peptide] + formate. Functionally, removes the formyl group from the N-terminal Met of newly synthesized proteins. Requires at least a dipeptide for an efficient rate of reaction. N-terminal L-methionine is a prerequisite for activity but the enzyme has broad specificity at other positions. The protein is Peptide deformylase of Rhodopseudomonas palustris (strain BisB5).